Here is a 374-residue protein sequence, read N- to C-terminus: 4-hydroxy-3-methylbut-2-en-1-yl diphosphate synthase (flavodoxin) (374 aa).

[4Fe-4S] cluster is bound by residues Cys270, Cys273, Cys305, and Glu312.

This sequence belongs to the IspG family. [4Fe-4S] cluster serves as cofactor.

The catalysed reaction is (2E)-4-hydroxy-3-methylbut-2-enyl diphosphate + oxidized [flavodoxin] + H2O + 2 H(+) = 2-C-methyl-D-erythritol 2,4-cyclic diphosphate + reduced [flavodoxin]. It participates in isoprenoid biosynthesis; isopentenyl diphosphate biosynthesis via DXP pathway; isopentenyl diphosphate from 1-deoxy-D-xylulose 5-phosphate: step 5/6. Functionally, converts 2C-methyl-D-erythritol 2,4-cyclodiphosphate (ME-2,4cPP) into 1-hydroxy-2-methyl-2-(E)-butenyl 4-diphosphate. The chain is 4-hydroxy-3-methylbut-2-en-1-yl diphosphate synthase (flavodoxin) from Yersinia enterocolitica serotype O:8 / biotype 1B (strain NCTC 13174 / 8081).